We begin with the raw amino-acid sequence, 123 residues long: MTGSCCGSTFSSLSYGGGCCQPCCCRDPCCCRPVTCQTTVCRPVTCVPRCTRPICEPCRRPVCCDPCSLQEGCCRPITCCPSSCTAVVCRPCCWATTCCQPVSVQSPCGQPTPCSTTCRTSSC.

Residues 5–112 form an 11 X 5 AA repeats of C-C-[CDPQRWG]-[APRS]-[CIPSTVD] region; that stretch reads CCGSTFSSLS…SVQSPCGQPT (108 aa).

It belongs to the KRTAP type 2 family. In terms of assembly, interacts with hair keratins.

In the hair cortex, hair keratin intermediate filaments are embedded in an interfilamentous matrix, consisting of hair keratin-associated proteins (KRTAP), which are essential for the formation of a rigid and resistant hair shaft through their extensive disulfide bond cross-linking with abundant cysteine residues of hair keratins. The matrix proteins include the high-sulfur and high-glycine-tyrosine keratins. The polypeptide is Keratin-associated protein 2-2 (KRTAP2-2) (Homo sapiens (Human)).